Consider the following 236-residue polypeptide: MSVLFEYPPLVRGILRRRYKRFFAEVELEDGQLVTAHCPNTGPMRAISTLGSPVYLSRSPDPARKLAYTWEMIDLDGTWVGVNTALPNRIVYRALVERVIAEVGTYRTIRREVPYGSENSRIDFLLTGEGEPLYLEVKSTTLNQGTLALFPDTVTTRGQKHLRELIRLCEHGTRAAMLYFINRGDCTAFSPGDSLDPLYGQLLRAGIERGLLVLPCRFEITPQSVRYLGTASILLA.

It belongs to the SfsA family.

The sequence is that of Sugar fermentation stimulation protein homolog from Gloeobacter violaceus (strain ATCC 29082 / PCC 7421).